The chain runs to 389 residues: Protein Wnt-10b (389 aa).

The N-terminal stretch at 1–28 is a signal peptide; it reads MLEEPRPRPPPSGLAGLLFLALCSRALS. A Phosphothreonine modification is found at Thr46. 11 disulfides stabilise this stretch: Cys83-Cys94, Cys136-Cys144, Cys146-Cys199, Cys247-Cys261, Cys249-Cys256, Cys318-Cys349, Cys334-Cys344, Cys348-Cys388, Cys364-Cys379, Cys366-Cys376, and Cys371-Cys372. Asn93 carries an N-linked (GlcNAc...) asparagine glycan. Positions 171-197 are disordered; the sequence is KSFPHSLPSPGPGSSPSPGPQDTWEWG. Residues 177 to 189 are compositionally biased toward pro residues; sequence LPSPGPGSSPSPG. The O-palmitoleoyl serine; by PORCN moiety is linked to residue Ser253. The N-linked (GlcNAc...) asparagine glycan is linked to Asn335.

It belongs to the Wnt family. Forms a soluble 1:1 complex with AFM; this prevents oligomerization and is required for prolonged biological activity. The complex with AFM may represent the physiological form in body fluids. In terms of processing, palmitoleoylation is required for efficient binding to frizzled receptors. Depalmitoleoylation leads to Wnt signaling pathway inhibition. Detected in most adult tissues. Highest levels were found in heart and skeletal muscle. Low levels are found in brain.

It localises to the secreted. Its subcellular location is the extracellular space. The protein localises to the extracellular matrix. Functionally, member of the Wnt ligand gene family that encodes for secreted proteins, which activate the Wnt signaling cascade. Specifically activates canonical Wnt/beta-catenin signaling and thus triggers beta-catenin/LEF/TCF-mediated transcriptional programs. Involved in signaling networks controlling stemness, pluripotency and cell fate decisions. Acts in the immune system, mammary gland, adipose tissue, bone and skin. The sequence is that of Protein Wnt-10b (WNT10B) from Homo sapiens (Human).